The chain runs to 371 residues: Glutamate 5-kinase (371 aa).

Lys8 lines the ATP pocket. Positions 49, 136, and 149 each coordinate substrate. Residues 169–170 (TD) and 213–219 (TGGMATK) each bind ATP. The region spanning 278 to 356 (TGKLILDDGA…EDIPQVLGYA (79 aa)) is the PUA domain.

It belongs to the glutamate 5-kinase family.

Its subcellular location is the cytoplasm. The catalysed reaction is L-glutamate + ATP = L-glutamyl 5-phosphate + ADP. It functions in the pathway amino-acid biosynthesis; L-proline biosynthesis; L-glutamate 5-semialdehyde from L-glutamate: step 1/2. In terms of biological role, catalyzes the transfer of a phosphate group to glutamate to form L-glutamate 5-phosphate. In Acaryochloris marina (strain MBIC 11017), this protein is Glutamate 5-kinase.